The following is a 336-amino-acid chain: MLGTVNTTGMQGFNKSERCPRDTRMTQLLFPVLYTVVFFTGVLLNTLALWVFIHIPSNSTFIIYLKNTLVADLIMTLMLPFKILSDSRLAPWQLRGFVCTFSSVVFYETMYVGIMMLGLIAFDRFLKIVVPFRKTFVKKTAFAKIVSISIWLLMFLISLPNMILNKEATASTVKKCASLKSPLGLLWHQVVSHTCQFIFWTVFILMLLFYTVIAKKVYDSYRKFKSRDSKHKRLEAKVFIVMAVFFVCFAPFHFVRVPYTHSQTTNKTDCRLENQLFLAKESTLFLATTNICMDPLIYIILCKKFTRKVPCMRWRTKTAASSDEHHSSQTDNITLS.

At 1-32 (MLGTVNTTGMQGFNKSERCPRDTRMTQLLFPV) the chain is on the extracellular side. N-linked (GlcNAc...) asparagine glycosylation is found at asparagine 6 and asparagine 14. Residues 33-53 (LYTVVFFTGVLLNTLALWVFI) form a helical membrane-spanning segment. The Cytoplasmic portion of the chain corresponds to 54–60 (HIPSNST). A helical transmembrane segment spans residues 61 to 81 (FIIYLKNTLVADLIMTLMLPF). Over 82–100 (KILSDSRLAPWQLRGFVCT) the chain is Extracellular. A disulfide bridge connects residues cysteine 99 and cysteine 176. The helical transmembrane segment at 101 to 121 (FSSVVFYETMYVGIMMLGLIA) threads the bilayer. Over 122-144 (FDRFLKIVVPFRKTFVKKTAFAK) the chain is Cytoplasmic. Residues 145–165 (IVSISIWLLMFLISLPNMILN) traverse the membrane as a helical segment. Over 166-193 (KEATASTVKKCASLKSPLGLLWHQVVSH) the chain is Extracellular. Residues 194–214 (TCQFIFWTVFILMLLFYTVIA) form a helical membrane-spanning segment. Residues 215–237 (KKVYDSYRKFKSRDSKHKRLEAK) lie on the Cytoplasmic side of the membrane. The chain crosses the membrane as a helical span at residues 238-258 (VFIVMAVFFVCFAPFHFVRVP). Topologically, residues 259 to 281 (YTHSQTTNKTDCRLENQLFLAKE) are extracellular. Asparagine 266 carries N-linked (GlcNAc...) asparagine glycosylation. The chain crosses the membrane as a helical span at residues 282-302 (STLFLATTNICMDPLIYIILC). The Cytoplasmic portion of the chain corresponds to 303–336 (KKFTRKVPCMRWRTKTAASSDEHHSSQTDNITLS).

The protein belongs to the G-protein coupled receptor 1 family. Highest levels in spleen, liver brain and kidney. Lower but significant level are also detected in intestine, stomach, skeletal muscle, testis, heart and lung.

It localises to the cell membrane. Receptor for ADP. Coupled to G(i)-proteins. May play a role in hematopoiesis and the immune system. In Rattus norvegicus (Rat), this protein is P2Y purinoceptor 13 (P2ry13).